A 456-amino-acid polypeptide reads, in one-letter code: 26S proteasome non-ATPase regulatory subunit 12 (456 aa).

The residue at position 2 (alanine 2) is an N-acetylalanine. Lysine 92 is covalently cross-linked (Glycyl lysine isopeptide (Lys-Gly) (interchain with G-Cter in SUMO1); alternate). Lysine 92 is covalently cross-linked (Glycyl lysine isopeptide (Lys-Gly) (interchain with G-Cter in SUMO2); alternate). An N6-acetyllysine mark is found at lysine 221 and lysine 368. The region spanning 242 to 420 (SICKHYRAIY…GIINFQRPKD (179 aa)) is the PCI domain.

This sequence belongs to the proteasome subunit p55 family. In terms of assembly, component of the 19S proteasome regulatory particle complex. The 26S proteasome consists of a 20S core particle (CP) and two 19S regulatory subunits (RP). The regulatory particle is made of a lid composed of 9 subunits including PSMD12, a base containing 6 ATPases and few additional components. Interacts with ERCC6.

In terms of biological role, component of the 26S proteasome, a multiprotein complex involved in the ATP-dependent degradation of ubiquitinated proteins. This complex plays a key role in the maintenance of protein homeostasis by removing misfolded or damaged proteins, which could impair cellular functions, and by removing proteins whose functions are no longer required. Therefore, the proteasome participates in numerous cellular processes, including cell cycle progression, apoptosis, or DNA damage repair. This is 26S proteasome non-ATPase regulatory subunit 12 (PSMD12) from Pongo abelii (Sumatran orangutan).